A 1623-amino-acid chain; its full sequence is Histone-lysine N-methyltransferase set-9 (1623 aa).

5 disordered regions span residues 1-102 (MADG…APQQ), 112-131 (AADA…RPTE), 198-227 (EDAV…SVAS), 448-600 (QRPG…VLRP), and 645-781 (TGQS…DEAA). Residues 62-71 (HQMENQEFYH) are compositionally biased toward basic and acidic residues. The span at 77–100 (EPQQIPQIPVFQPAAYNPPNYVAP) shows a compositional bias: low complexity. A compositionally biased stretch (polar residues) spans 206–227 (PGTQYRRNQQAGGGLPSTSVAS). The span at 554–573 (MTQEEKNAHFARLTTDKEKP) shows a compositional bias: basic and acidic residues. A compositionally biased stretch (pro residues) spans 587–597 (PHVPPPPPPLV). Residues 645–669 (TGQSGSSAAARQRTVSGSAARAQTY) show a composition bias toward polar residues. Basic residues predominate over residues 723–733 (HRPRGRPKGTR). A compositionally biased stretch (acidic residues) spans 772 to 781 (SESEGIDEAA). Residues 786–834 (TMRCHCGMDHGDGDTIECEGCKTWQHMACMGLTLKSNTSKYKCEMCLPR) form a PHD-type zinc finger. Positions 857–895 (AARKQKRKSEPVEQKQKSSQPSTSRKSAPMALQQPAEPR) are disordered. Positions 873 to 882 (KSSQPSTSRK) are enriched in polar residues. The SET domain occupies 965-1056 (MSSEVKRQPG…RNTEVTLPFD (92 aa)). Basic and acidic residues-rich tracts occupy residues 1089-1157 (AERH…KKME) and 1172-1194 (AREE…EGKR). 2 disordered regions span residues 1089-1318 (AERH…NVAP) and 1356-1623 (LLAG…TRWN). Positions 1093-1201 (RAMDHKKQEA…GKRKEARRRS (109 aa)) form a coiled coil. The span at 1242–1252 (TTQPSTSSFAT) shows a compositional bias: polar residues. Residues 1282 to 1293 (ATTVATPKATTA) are compositionally biased toward low complexity. Residues 1364–1401 (FSEVRAQIEEENRMKERSRKREAKKKAVEKEKKEHRKE) adopt a coiled-coil conformation. Composition is skewed to basic and acidic residues over residues 1365–1378 (SEVR…NRMK), 1388–1406 (KKAV…KKTN), 1413–1429 (KSEK…EKKP), and 1447–1464 (KKTE…ESSS). Over residues 1533 to 1544 (SSSNTAPTTTIA) the composition is skewed to polar residues.

This sequence belongs to the class V-like SAM-binding methyltransferase superfamily. In terms of tissue distribution, predominantly expressed in the germline (at protein level).

It localises to the nucleus. It carries out the reaction L-lysyl-[histone] + S-adenosyl-L-methionine = N(6)-methyl-L-lysyl-[histone] + S-adenosyl-L-homocysteine + H(+). Its function is as follows. Histone methyltransferase. Might play a role in transcriptional regulation. Together with set-26, negatively regulates lifespan in a germline-independent, partially daf-16-dependent fashion. Together with set-26, plays a role in germline development and maintenance and might play a role in the restriction of the trimethylation mark on histone H3 'Lys-4'(H3K4me3) to target genes specifically in the germline. This is Histone-lysine N-methyltransferase set-9 from Caenorhabditis elegans.